The following is a 262-amino-acid chain: Acyl-[acyl-carrier-protein]--UDP-N-acetylglucosamine O-acyltransferase (262 aa).

It belongs to the transferase hexapeptide repeat family. LpxA subfamily. In terms of assembly, homotrimer.

It is found in the cytoplasm. It carries out the reaction a (3R)-hydroxyacyl-[ACP] + UDP-N-acetyl-alpha-D-glucosamine = a UDP-3-O-[(3R)-3-hydroxyacyl]-N-acetyl-alpha-D-glucosamine + holo-[ACP]. Its pathway is glycolipid biosynthesis; lipid IV(A) biosynthesis; lipid IV(A) from (3R)-3-hydroxytetradecanoyl-[acyl-carrier-protein] and UDP-N-acetyl-alpha-D-glucosamine: step 1/6. In terms of biological role, involved in the biosynthesis of lipid A, a phosphorylated glycolipid that anchors the lipopolysaccharide to the outer membrane of the cell. The polypeptide is Acyl-[acyl-carrier-protein]--UDP-N-acetylglucosamine O-acyltransferase (Shigella boydii serotype 18 (strain CDC 3083-94 / BS512)).